The sequence spans 637 residues: Phospholipase B (637 aa).

An N-terminal signal peptide occupies residues 1 to 19 (MSIITTAFALSLLATTAFA). A PLA2c domain is found at 46–572 (DCPSNVTWIR…DTWCWAGDDN (527 aa)). Asn50, Asn56, Asn122, Asn231, Asn246, Asn272, Asn314, Asn343, Asn387, Asn433, Asn481, Asn501, Asn528, Asn553, Asn572, Asn594, and Asn606 each carry an N-linked (GlcNAc...) asparagine glycan.

Belongs to the lysophospholipase family. In terms of processing, N-glycosylated.

It is found in the secreted. It catalyses the reaction a 1-acyl-sn-glycero-3-phosphocholine + H2O = sn-glycerol 3-phosphocholine + a fatty acid + H(+). In terms of biological role, exhibits phospholipase B (PLB), lysophospholipase (LPL) and lysophospholipase/transacylase (LPTA) activities. The polypeptide is Phospholipase B (PLB1) (Cryptococcus neoformans var. neoformans serotype D (strain B-3501A) (Filobasidiella neoformans)).